Reading from the N-terminus, the 170-residue chain is Ribosome maturation factor RimM (170 aa).

In terms of domain architecture, PRC barrel spans 97-170 (HPDEYYWVDL…RIVVDWDPEF (74 aa)).

It belongs to the RimM family. In terms of assembly, binds ribosomal protein uS19.

It is found in the cytoplasm. An accessory protein needed during the final step in the assembly of 30S ribosomal subunit, possibly for assembly of the head region. Essential for efficient processing of 16S rRNA. May be needed both before and after RbfA during the maturation of 16S rRNA. It has affinity for free ribosomal 30S subunits but not for 70S ribosomes. This Xylella fastidiosa (strain M12) protein is Ribosome maturation factor RimM.